The sequence spans 222 residues: Small ribosomal subunit protein uS3 (222 aa).

In terms of domain architecture, KH type-2 spans 38–106; sequence IRKFISEKLA…NVHINIVEIK (69 aa).

It belongs to the universal ribosomal protein uS3 family. In terms of assembly, part of the 30S ribosomal subunit. Forms a tight complex with proteins S10 and S14.

In terms of biological role, binds the lower part of the 30S subunit head. Binds mRNA in the 70S ribosome, positioning it for translation. The polypeptide is Small ribosomal subunit protein uS3 (Lactobacillus gasseri (strain ATCC 33323 / DSM 20243 / BCRC 14619 / CIP 102991 / JCM 1131 / KCTC 3163 / NCIMB 11718 / NCTC 13722 / AM63)).